The chain runs to 448 residues: Trigger factor (448 aa).

One can recognise a PPIase FKBP-type domain in the interval 167–253; the sequence is GSIVRVDFVE…IKDIKKRDIP (87 aa).

This sequence belongs to the FKBP-type PPIase family. Tig subfamily.

It is found in the cytoplasm. The enzyme catalyses [protein]-peptidylproline (omega=180) = [protein]-peptidylproline (omega=0). Involved in protein export. Acts as a chaperone by maintaining the newly synthesized protein in an open conformation. Functions as a peptidyl-prolyl cis-trans isomerase. This is Trigger factor from Borrelia hermsii (strain HS1 / DAH).